The primary structure comprises 174 residues: Crossover junction endodeoxyribonuclease RuvC (174 aa).

Catalysis depends on residues Asp8, Glu69, and Asp141. Residues Asp8, Glu69, and Asp141 each contribute to the Mg(2+) site.

This sequence belongs to the RuvC family. As to quaternary structure, homodimer which binds Holliday junction (HJ) DNA. The HJ becomes 2-fold symmetrical on binding to RuvC with unstacked arms; it has a different conformation from HJ DNA in complex with RuvA. In the full resolvosome a probable DNA-RuvA(4)-RuvB(12)-RuvC(2) complex forms which resolves the HJ. Requires Mg(2+) as cofactor.

It localises to the cytoplasm. The catalysed reaction is Endonucleolytic cleavage at a junction such as a reciprocal single-stranded crossover between two homologous DNA duplexes (Holliday junction).. Functionally, the RuvA-RuvB-RuvC complex processes Holliday junction (HJ) DNA during genetic recombination and DNA repair. Endonuclease that resolves HJ intermediates. Cleaves cruciform DNA by making single-stranded nicks across the HJ at symmetrical positions within the homologous arms, yielding a 5'-phosphate and a 3'-hydroxyl group; requires a central core of homology in the junction. The consensus cleavage sequence is 5'-(A/T)TT(C/G)-3'. Cleavage occurs on the 3'-side of the TT dinucleotide at the point of strand exchange. HJ branch migration catalyzed by RuvA-RuvB allows RuvC to scan DNA until it finds its consensus sequence, where it cleaves and resolves the cruciform DNA. This Xanthomonas oryzae pv. oryzae (strain MAFF 311018) protein is Crossover junction endodeoxyribonuclease RuvC.